Consider the following 749-residue polypeptide: MSNTLPVTEFLLSKYYELSNTPATDSSSLFKWLYHKTLSRKQLLISDLSSQKKHAISYDQWNDIASRLDDLTGLSEWKTIDESSLYNYKLLQDLTIRMRHLRTTHDYHRLLYLIRTKWVRNLGNMNNVNLYRHSHTGTKQIIHDYLEESQAVLTALIHQSNMNDHYLLGILQQTRRNIGRTALVLSGGSTFGLFHIGVLAALFESDLMPKVISGSSAGAIVASIFCVHTTQEIPSLLTNVLNMEFNIFNDDNSKSPNENLLIKISRFCQNGTWFNNQPLINTMLSFLGNLTFREAYNKTGKILNITVSPASIYEQPKLLNNLTAPNVLIWSAVCASCSLPGVFPSTPLFEKDPHTGKIKEWGATNLHLSNMKFMDGSVDNDMPISRLSEMFNVDHIIACQVNIHVFPLLKFSNTCVGGEIEKEITARFRNQVTKIFKFFSDETIHFLDILKELEFHPYLMTKLKHLFLQQYSGNVTILPDLSMVGQFHEVLKNPSQLFLLHQTTLGARATWPKISMIQNNCGQEFALDKAITFLKEKIIISSSIKNPLQFYQPRFSEQIKSLSIMDADLPGVDLEESSSNSLSIIKSPNKTAAPGRFPLQPLPSPSSTFNKRKMDMLSPSPSPSTSPQRSKSSFTQQGTRQKANSLSFAIGASSLRLKKSPLKVPSRPQFKKRSSYYNQNMSAEMRKNRKKSGTISSYDVQTNSEDFPIPAIENGSFDNTLFNPSRFPMDAMSAATNDNFMNNSDIFQN.

An HXXXXD acyltransferase motif motif is present at residues 54–59 (HAISYD). The region spanning 183 to 388 (LVLSGGSTFG…DNDMPISRLS (206 aa)) is the PNPLA domain. A GXSXG motif is present at residues 214 to 218 (GSSAG). Catalysis depends on Ser216, which acts as the Nucleophile. Residues Asn270, Asn289, Asn297, Asn304, and Asn321 are each glycosylated (N-linked (GlcNAc...) asparagine). Asp375 acts as the Proton acceptor in catalysis. N-linked (GlcNAc...) asparagine glycosylation is found at Asn474 and Asn589. The disordered stretch occupies residues 585–643 (IKSPNKTAAPGRFPLQPLPSPSSTFNKRKMDMLSPSPSPSTSPQRSKSSFTQQGTRQKA). Positions 623 to 633 (PSTSPQRSKSS) are enriched in low complexity. Over residues 634–643 (FTQQGTRQKA) the composition is skewed to polar residues. Ser645 carries the post-translational modification Phosphoserine. 3 N-linked (GlcNAc...) asparagine glycosylation sites follow: Asn680, Asn714, and Asn742.

The protein localises to the lipid droplet. It catalyses the reaction a triacylglycerol + H2O = a diacylglycerol + a fatty acid + H(+). The catalysed reaction is 1-(9Z-octadecenoyl)-sn-glycero-3-phosphate + (9Z)-octadecenoyl-CoA = 1,2-di-(9Z-octadecenoyl)-sn-glycero-3-phosphate + CoA. The enzyme catalyses 1-(9Z-octadecenoyl)-sn-glycero-3-phosphate + hexadecanoyl-CoA = 1-hexadecanoyl-2-(9Z-octadecenoyl)-sn-glycero-3-phosphate + CoA. With respect to regulation, loses its lipolytic activity in cells lacking nonpolar lipids, but retains its side activity as lysophospholipid acyltransferase. Its function is as follows. Lipid particle-localized triacylglycerol (TAG) lipase. The lipid droplet/particle is a lipid storage compartment which serves as a depot of energy and building blocks for membrane lipid biosynthesis. Involved in the mobilization of the non-polar storage lipids triacylglycerols (TAGs) from lipid particles by hydrolysis of TAGs, releasing and supplying specific fatty acids to the appropriate metabolic pathways. Also catalyzes the acylation of lysophosphatidic acid (LPA). This is Triacylglycerol lipase 5 (TGL5) from Saccharomyces cerevisiae (strain ATCC 204508 / S288c) (Baker's yeast).